A 314-amino-acid chain; its full sequence is Acetaldehyde dehydrogenase (314 aa).

14–17 (SGNI) lines the NAD(+) pocket. Cys-132 functions as the Acyl-thioester intermediate in the catalytic mechanism. Residues 163-171 (SAGPGTRAN) and Asn-291 each bind NAD(+).

The protein belongs to the acetaldehyde dehydrogenase family.

It catalyses the reaction acetaldehyde + NAD(+) + CoA = acetyl-CoA + NADH + H(+). The protein is Acetaldehyde dehydrogenase of Polaromonas sp. (strain JS666 / ATCC BAA-500).